The sequence spans 204 residues: uncharacterized protein (204 aa).

This is an uncharacterized protein from Rickettsia prowazekii (strain Madrid E).